Reading from the N-terminus, the 483-residue chain is Altronate oxidoreductase (483 aa).

NAD(+) is bound at residue Ile-18–Ala-29.

It belongs to the mannitol dehydrogenase family. UxaB subfamily.

The catalysed reaction is D-altronate + NAD(+) = keto-D-tagaturonate + NADH + H(+). It participates in carbohydrate metabolism; pentose and glucuronate interconversion. The polypeptide is Altronate oxidoreductase (Enterobacter sp. (strain 638)).